The following is a 409-amino-acid chain: Serine/threonine transporter SstT (409 aa).

The next 9 helical transmembrane spans lie at 14-34, 48-68, 82-102, 141-161, 192-212, 216-236, 290-310, 322-342, and 357-377; these read GSLV…ATLS, FVGA…AASI, IVIL…LMSF, ALMT…GLAL, IGIF…AIAG, LLLV…PAIV, IPLG…ILTL, ILTA…ASGV, and FGIS…IGVI.

The protein belongs to the dicarboxylate/amino acid:cation symporter (DAACS) (TC 2.A.23) family.

The protein resides in the cell inner membrane. It catalyses the reaction L-serine(in) + Na(+)(in) = L-serine(out) + Na(+)(out). It carries out the reaction L-threonine(in) + Na(+)(in) = L-threonine(out) + Na(+)(out). Functionally, involved in the import of serine and threonine into the cell, with the concomitant import of sodium (symport system). This Shewanella woodyi (strain ATCC 51908 / MS32) protein is Serine/threonine transporter SstT.